Reading from the N-terminus, the 180-residue chain is UPF0398 protein EF_1150 (180 aa).

Belongs to the UPF0398 family.

This Enterococcus faecalis (strain ATCC 700802 / V583) protein is UPF0398 protein EF_1150.